A 170-amino-acid chain; its full sequence is Translation machinery-associated protein 16 homolog (170 aa).

Belongs to the TMA16 family.

This is Translation machinery-associated protein 16 homolog from Dictyostelium discoideum (Social amoeba).